The following is a 397-amino-acid chain: Lysophospholipid transporter LplT (397 aa).

Over 1-17 (MSESVHTNTSLWSKGMK) the chain is Periplasmic. Residues 18 to 38 (AVIVAQFLSAFGDNALLFATL) traverse the membrane as a helical segment. Residues 39–52 (ALLKAQFYPEWSQP) lie on the Cytoplasmic side of the membrane. The chain crosses the membrane as a helical span at residues 53–73 (ILQMVFVGAYILFAPFVGQVA). Residues 74–90 (DSFAKGRVMMFANGLKL) lie on the Periplasmic side of the membrane. A helical transmembrane segment spans residues 91–111 (LGAASICFGINPFLGYTLVGV). Topologically, residues 112 to 144 (GAAAYSPAKYGILGELTTGSKLVKANGLMEAST) are cytoplasmic. Residues 145–165 (IAAILLGSVAGGVLADWHVLV) traverse the membrane as a helical segment. Residue Ala166 is a topological domain, periplasmic. Residues 167–187 (LAACALAYGGAVVANIYIPKL) traverse the membrane as a helical segment. Residues 188 to 226 (AAARPGQSWNLINMTRSFLNACTSLWRNGETRFSLVGTS) are Cytoplasmic-facing. Residues 227–247 (LFWGAGVTLRFLLVLWVPVAL) traverse the membrane as a helical segment. Residues 248–256 (GITDNATPT) are Periplasmic-facing. The chain crosses the membrane as a helical span at residues 257-277 (YLNAMVAIGIVVGAGAAAKLV). The Cytoplasmic portion of the chain corresponds to 278-280 (TLE). Residues 281-301 (TVSRCMPAGILIGVVVLIFSL) form a helical membrane-spanning segment. At 302 to 304 (QHE) the chain is on the periplasmic side. A helical transmembrane segment spans residues 305–325 (LLPAYALLMLIGVMGGFFVVP). Residues 326–343 (LNALLQERGKKSVGAGNA) lie on the Cytoplasmic side of the membrane. The chain crosses the membrane as a helical span at residues 344 to 364 (IAVQNLGENSAMLLMLGIYSL). At 365-366 (AV) the chain is on the periplasmic side. Residues 367-387 (MVGIPVVPIGIGFGALFALAI) traverse the membrane as a helical segment. Residues 388 to 397 (TALWIWQRRH) are Cytoplasmic-facing.

It belongs to the major facilitator superfamily. LplT (TC 2.A.1.42) family.

It is found in the cell inner membrane. Catalyzes the facilitated diffusion of 2-acyl-glycero-3-phosphoethanolamine (2-acyl-GPE) into the cell. In Escherichia coli (strain ATCC 8739 / DSM 1576 / NBRC 3972 / NCIMB 8545 / WDCM 00012 / Crooks), this protein is Lysophospholipid transporter LplT.